We begin with the raw amino-acid sequence, 125 residues long: Large ribosomal subunit protein bL12 (125 aa).

The protein belongs to the bacterial ribosomal protein bL12 family. Homodimer. Part of the ribosomal stalk of the 50S ribosomal subunit. Forms a multimeric L10(L12)X complex, where L10 forms an elongated spine to which 2 to 4 L12 dimers bind in a sequential fashion. Binds GTP-bound translation factors.

Its function is as follows. Forms part of the ribosomal stalk which helps the ribosome interact with GTP-bound translation factors. Is thus essential for accurate translation. The protein is Large ribosomal subunit protein bL12 of Helicobacter pylori (strain P12).